The sequence spans 1408 residues: DNA-directed RNA polymerase subunit beta'' (1408 aa).

The protein belongs to the RNA polymerase beta' chain family. RpoC2 subfamily. In terms of assembly, in plastids the minimal PEP RNA polymerase catalytic core is composed of four subunits: alpha, beta, beta', and beta''. When a (nuclear-encoded) sigma factor is associated with the core the holoenzyme is formed, which can initiate transcription.

It is found in the plastid. The protein resides in the chloroplast. The enzyme catalyses RNA(n) + a ribonucleoside 5'-triphosphate = RNA(n+1) + diphosphate. Its function is as follows. DNA-dependent RNA polymerase catalyzes the transcription of DNA into RNA using the four ribonucleoside triphosphates as substrates. In Psilotum nudum (Whisk fern), this protein is DNA-directed RNA polymerase subunit beta''.